The chain runs to 196 residues: dTDP-4-dehydro-6-deoxyglucose 3-epimerase (196 aa).

Residues Arg-21, Glu-26, 45–47 (QVN), and Arg-57 contribute to the substrate site. Residue His-60 is the Proton acceptor of the active site. Residues Lys-70 and Arg-117 each contribute to the substrate site. Tyr-130 acts as the Proton donor in catalysis. 2 residues coordinate substrate: Glu-141 and Arg-166.

This sequence belongs to the dTDP-4-dehydrorhamnose 3,5-epimerase family. As to quaternary structure, homodimer.

It carries out the reaction dTDP-4-dehydro-6-deoxy-alpha-D-glucose = dTDP-4-dehydro-6-deoxy-alpha-D-allose. It functions in the pathway antibiotic biosynthesis. Its function is as follows. Involved in the biosynthesis of dTDP-6-deoxy-D-allose, an intermediate in the biosynthesis of mycinose, which is one of the two unusual sugars attached to the 16-membered macrolactone ring of the aglycone antibiotic dihydrochalcomycin (GERI-155). Catalyzes the conversion of dTDP-4-oxo-6-deoxyglucose to dTDP-4-oxo-6-deoxyallose, via a C-3 epimerization. This chain is dTDP-4-dehydro-6-deoxyglucose 3-epimerase, found in Streptomyces sp.